Reading from the N-terminus, the 48-residue chain is 2-deoxy-glucose resistant protein 1, mitochondrial (48 aa).

Residues Met1–Gln28 constitute a mitochondrion transit peptide.

It is found in the mitochondrion. This Saccharomyces cerevisiae (strain ATCC 204508 / S288c) (Baker's yeast) protein is 2-deoxy-glucose resistant protein 1, mitochondrial (DGR1).